A 406-amino-acid polypeptide reads, in one-letter code: Cysteine desulfurase (406 aa).

Lys226 carries the N6-(pyridoxal phosphate)lysine modification. Catalysis depends on Cys364, which acts as the Cysteine persulfide intermediate.

The protein belongs to the class-V pyridoxal-phosphate-dependent aminotransferase family. Csd subfamily. In terms of assembly, homodimer. Interacts with SufE and the SufBCD complex composed of SufB, SufC and SufD. The interaction with SufE is required to mediate the direct transfer of the sulfur atom from the S-sulfanylcysteine. Pyridoxal 5'-phosphate is required as a cofactor.

It is found in the cytoplasm. The enzyme catalyses (sulfur carrier)-H + L-cysteine = (sulfur carrier)-SH + L-alanine. The catalysed reaction is L-selenocysteine + AH2 = hydrogenselenide + L-alanine + A + H(+). Its pathway is cofactor biosynthesis; iron-sulfur cluster biosynthesis. Cysteine desulfurases mobilize the sulfur from L-cysteine to yield L-alanine, an essential step in sulfur metabolism for biosynthesis of a variety of sulfur-containing biomolecules. Component of the suf operon, which is activated and required under specific conditions such as oxidative stress and iron limitation. Acts as a potent selenocysteine lyase in vitro, that mobilizes selenium from L-selenocysteine. Selenocysteine lyase activity is however unsure in vivo. The protein is Cysteine desulfurase of Escherichia coli O9:H4 (strain HS).